The sequence spans 214 residues: N-(5'-phosphoribosyl)anthranilate isomerase (214 aa).

The protein belongs to the TrpF family.

The enzyme catalyses N-(5-phospho-beta-D-ribosyl)anthranilate = 1-(2-carboxyphenylamino)-1-deoxy-D-ribulose 5-phosphate. It functions in the pathway amino-acid biosynthesis; L-tryptophan biosynthesis; L-tryptophan from chorismate: step 3/5. The sequence is that of N-(5'-phosphoribosyl)anthranilate isomerase from Haloarcula marismortui (strain ATCC 43049 / DSM 3752 / JCM 8966 / VKM B-1809) (Halobacterium marismortui).